The following is a 298-amino-acid chain: Factor-induced gene 1 protein (298 aa).

4 helical membrane passes run 17-37 (IFAL…LIGC), 163-183 (VLMA…YVTV), 195-215 (FLLL…MWTH), and 243-263 (VMAW…WLIF). S288 carries the phosphoserine modification. T293 carries the phosphothreonine modification. The residue at position 296 (S296) is a Phosphoserine.

It localises to the membrane. In terms of biological role, required for efficient mating. In Saccharomyces cerevisiae (strain ATCC 204508 / S288c) (Baker's yeast), this protein is Factor-induced gene 1 protein (FIG1).